Consider the following 647-residue polypeptide: UvrABC system protein C (647 aa).

In terms of domain architecture, GIY-YIG spans 16-95 (VEPGVYRFRD…IKEFDPRFNV (80 aa)). The UVR domain occupies 208–243 (DRFARELEQQMNAAAAELDFERAARLRDDLGALKRA).

The protein belongs to the UvrC family. In terms of assembly, interacts with UvrB in an incision complex.

The protein localises to the cytoplasm. In terms of biological role, the UvrABC repair system catalyzes the recognition and processing of DNA lesions. UvrC both incises the 5' and 3' sides of the lesion. The N-terminal half is responsible for the 3' incision and the C-terminal half is responsible for the 5' incision. This Mycolicibacterium paratuberculosis (strain ATCC BAA-968 / K-10) (Mycobacterium paratuberculosis) protein is UvrABC system protein C.